Reading from the N-terminus, the 578-residue chain is Proline--tRNA ligase (578 aa).

It belongs to the class-II aminoacyl-tRNA synthetase family. ProS type 1 subfamily. In terms of assembly, homodimer.

The protein localises to the cytoplasm. The enzyme catalyses tRNA(Pro) + L-proline + ATP = L-prolyl-tRNA(Pro) + AMP + diphosphate. Functionally, catalyzes the attachment of proline to tRNA(Pro) in a two-step reaction: proline is first activated by ATP to form Pro-AMP and then transferred to the acceptor end of tRNA(Pro). As ProRS can inadvertently accommodate and process non-cognate amino acids such as alanine and cysteine, to avoid such errors it has two additional distinct editing activities against alanine. One activity is designated as 'pretransfer' editing and involves the tRNA(Pro)-independent hydrolysis of activated Ala-AMP. The other activity is designated 'posttransfer' editing and involves deacylation of mischarged Ala-tRNA(Pro). The misacylated Cys-tRNA(Pro) is not edited by ProRS. The chain is Proline--tRNA ligase from Burkholderia vietnamiensis (strain G4 / LMG 22486) (Burkholderia cepacia (strain R1808)).